Reading from the N-terminus, the 230-residue chain is Orotidine 5'-phosphate decarboxylase (230 aa).

Residues aspartate 10, lysine 31, 58–67 (DLKLHDIPNT), threonine 117, arginine 179, glutamine 188, glycine 208, and arginine 209 each bind substrate. The active-site Proton donor is lysine 60.

The protein belongs to the OMP decarboxylase family. Type 1 subfamily. As to quaternary structure, homodimer.

It catalyses the reaction orotidine 5'-phosphate + H(+) = UMP + CO2. The protein operates within pyrimidine metabolism; UMP biosynthesis via de novo pathway; UMP from orotate: step 2/2. In terms of biological role, catalyzes the decarboxylation of orotidine 5'-monophosphate (OMP) to uridine 5'-monophosphate (UMP). The chain is Orotidine 5'-phosphate decarboxylase from Staphylococcus aureus (strain bovine RF122 / ET3-1).